Reading from the N-terminus, the 1210-residue chain is Homeodomain-interacting protein kinase 1 (1210 aa).

K25 is covalently cross-linked (Glycyl lysine isopeptide (Lys-Gly) (interchain with G-Cter in SUMO); alternate). K25 participates in a covalent cross-link: Glycyl lysine isopeptide (Lys-Gly) (interchain with G-Cter in SUMO2); alternate. Residues K120 and K124 each participate in a glycyl lysine isopeptide (Lys-Gly) (interchain with G-Cter in SUMO2) cross-link. In terms of domain architecture, Protein kinase spans 190–518 (YEVLEFLGRG…PLKTLNHQFV (329 aa)). ATP is bound by residues 196–204 (LGRGTFGQV) and K219. D315 functions as the Proton acceptor in the catalytic mechanism. Residues 835–856 (QQQSSSLPSKKNKQSAPVSSKS) form a disordered region. A Nuclear localization signal 1 (NLS1) motif is present at residues 844–847 (KKNK). S872 bears the Phosphoserine mark. Positions 885 to 1093 (PVQDQHQPII…FQHGSPLHST (209 aa)) are interaction with TP53. Positions 891–998 (QPIIIPDTPS…PLKTQLGDCT (108 aa)) are required for localization to nuclear speckles. The segment at 902-926 (PVSVITIRSDTDEEEDNKYKPNSSS) is SUMO interaction motifs (SIM); required for nuclear localization and kinase activity. The disordered stretch occupies residues 938–981 (TVNDSPDSDSSLSSPHPTDTLSALRGNSGTLLEGPGRPAADGIG). Positions 941–959 (DSPDSDSSLSSPHPTDTLS) are enriched in low complexity. K991 participates in a covalent cross-link: Glycyl lysine isopeptide (Lys-Gly) (interchain with G-Cter in SUMO2). Disordered regions lie at residues 1046–1069 (LSQNQQSSSASTSQERSSNPAPRR) and 1084–1104 (FQHGSPLHSTGHPHLAPAPAH). Low complexity-rich tracts occupy residues 1047-1063 (SQNQQSSSASTSQERSS) and 1095-1104 (HPHLAPAPAH). At S1200 the chain carries Phosphoserine. A Glycyl lysine isopeptide (Lys-Gly) (interchain with G-Cter in SUMO) cross-link involves residue K1203.

It belongs to the protein kinase superfamily. CMGC Ser/Thr protein kinase family. HIPK subfamily. As to quaternary structure, interacts with Nkx1-2, Nkx2-5, MYB, PARK7, DAXX and p53/TP53. Part of a cytoplasmic complex made of HIPK1, DAB2IP and MAP3K5 in response to TNF. This complex formation promotes MAP3K5-JNK activation and subsequent apoptosis. Phosphorylated and activated by JNK1. Autophosphorylated. Post-translationally, sumoylated. When conjugated it is directed to nuclear speckles. SENP1-mediated desumoylation is mediated by TNF in response to stress stimuli, triggering transient translocation from nucleus to cytoplasm. Ubiquitously expressed, with high levels in reproductive tissues. Expressed in the epithelial layer of mammary gland, uterus and epididymis, in the corpus luteum, and in post-meiotic round spermatids.

The protein resides in the nucleus. The protein localises to the cytoplasm. It is found in the nucleus speckle. The enzyme catalyses L-seryl-[protein] + ATP = O-phospho-L-seryl-[protein] + ADP + H(+). It carries out the reaction L-threonyl-[protein] + ATP = O-phospho-L-threonyl-[protein] + ADP + H(+). Serine/threonine-protein kinase involved in transcription regulation and TNF-mediated cellular apoptosis. Plays a role as a corepressor for homeodomain transcription factors. Phosphorylates DAXX and MYB. Phosphorylates DAXX in response to stress, and mediates its translocation from the nucleus to the cytoplasm. Inactivates MYB transcription factor activity by phosphorylation. Prevents MAP3K5-JNK activation in the absence of TNF. TNF triggers its translocation to the cytoplasm in response to stress stimuli, thus activating nuclear MAP3K5-JNK by derepression and promoting apoptosis. May be involved in anti-oxidative stress responses. Involved in the regulation of eye size, lens formation and retinal lamination during late embryogenesis. Promotes angiogenesis and to be involved in erythroid differentiation. May be involved in malignant squamous cell tumor formation. Phosphorylates PAGE4 at 'Thr-51' which is critical for the ability of PAGE4 to potentiate the transcriptional activator activity of JUN. This is Homeodomain-interacting protein kinase 1 (Hipk1) from Mus musculus (Mouse).